A 1361-amino-acid chain; its full sequence is Protein CFT1 (1361 aa).

The tract at residues 455-493 (AAYNNEDDDDDDDDFNLYSDEENDQVNNKNDRTFGTNES) is disordered. The span at 459–478 (NEDDDDDDDDFNLYSDEEND) shows a compositional bias: acidic residues. Over residues 479–493 (QVNNKNDRTFGTNES) the composition is skewed to polar residues.

This sequence belongs to the CFT1 family.

Its subcellular location is the nucleus. Its function is as follows. RNA-binding component of the cleavage and polyadenylation factor (CPF) complex, which plays a key role in polyadenylation-dependent pre-mRNA 3'-end formation and cooperates with cleavage factors including the CFIA complex and NAB4/CFIB. Involved in poly(A) site recognition. May be involved in coupling transcription termination and mRNA 3'-end formation. The polypeptide is Protein CFT1 (CFT1) (Candida glabrata (strain ATCC 2001 / BCRC 20586 / JCM 3761 / NBRC 0622 / NRRL Y-65 / CBS 138) (Yeast)).